The primary structure comprises 78 residues: Beta-defensin 105 (78 aa).

An N-terminal signal peptide occupies residues 1–27 (MALIRKTFYFLFAMFFILVQLPSGCQA). Disulfide bonds link cysteine 43-cysteine 74, cysteine 53-cysteine 67, and cysteine 57-cysteine 73.

The protein belongs to the beta-defensin family. Specifically expressed in testis.

It localises to the secreted. Has antibacterial activity. The protein is Beta-defensin 105 (DEFB105A) of Homo sapiens (Human).